A 143-amino-acid polypeptide reads, in one-letter code: MAKKIVGYIKLQVPAGKANPSPPIGPALGQRGLNIMEFCKAFNAQTQGVEPGLPIPVVITAYADKSFTFIMKTPPATILIKKAAGVQKGSPKPHTDKVGKLNRTQLEEIAKTKQPDLTAADMDAAVRTIAGSARSMGIEVEGV.

The protein belongs to the universal ribosomal protein uL11 family. As to quaternary structure, part of the ribosomal stalk of the 50S ribosomal subunit. Interacts with L10 and the large rRNA to form the base of the stalk. L10 forms an elongated spine to which L12 dimers bind in a sequential fashion forming a multimeric L10(L12)X complex. Post-translationally, one or more lysine residues are methylated.

Forms part of the ribosomal stalk which helps the ribosome interact with GTP-bound translation factors. The sequence is that of Large ribosomal subunit protein uL11 from Laribacter hongkongensis (strain HLHK9).